Consider the following 319-residue polypeptide: Acetyl-coenzyme A carboxylase carboxyl transferase subunit alpha (319 aa).

Residues 35-296 (DLDKEIKQLE…KQRLIEQLNE (262 aa)) enclose the CoA carboxyltransferase C-terminal domain.

This sequence belongs to the AccA family. In terms of assembly, acetyl-CoA carboxylase is a heterohexamer composed of biotin carboxyl carrier protein (AccB), biotin carboxylase (AccC) and two subunits each of ACCase subunit alpha (AccA) and ACCase subunit beta (AccD).

The protein localises to the cytoplasm. The catalysed reaction is N(6)-carboxybiotinyl-L-lysyl-[protein] + acetyl-CoA = N(6)-biotinyl-L-lysyl-[protein] + malonyl-CoA. It functions in the pathway lipid metabolism; malonyl-CoA biosynthesis; malonyl-CoA from acetyl-CoA: step 1/1. Component of the acetyl coenzyme A carboxylase (ACC) complex. First, biotin carboxylase catalyzes the carboxylation of biotin on its carrier protein (BCCP) and then the CO(2) group is transferred by the carboxyltransferase to acetyl-CoA to form malonyl-CoA. This Aliivibrio salmonicida (strain LFI1238) (Vibrio salmonicida (strain LFI1238)) protein is Acetyl-coenzyme A carboxylase carboxyl transferase subunit alpha.